Reading from the N-terminus, the 297-residue chain is uncharacterized protein (297 aa).

Residues 136 to 174 (FSETNDDSTDEEIDTPINDDDDDDKNNDADNNDINEDNK) form a disordered region. Positions 139–170 (TNDDSTDEEIDTPINDDDDDDKNNDADNNDIN) are enriched in acidic residues.

The protein to S.pombe SpBC725.03.

This is an uncharacterized protein from Saccharomyces cerevisiae (strain ATCC 204508 / S288c) (Baker's yeast).